The sequence spans 332 residues: Ketol-acid reductoisomerase (NADP(+)) 1 (332 aa).

In terms of domain architecture, KARI N-terminal Rossmann spans 2 to 182 (AELFYDADAD…GGTRAGVIKT (181 aa)). Residues 25-28 (YGSQ), S51, S53, and 83-86 (DPIQ) contribute to the NADP(+) site. H108 is a catalytic residue. G134 contacts NADP(+). Residues 183–328 (TFTEETETDL…KELRKLMSWV (146 aa)) enclose the KARI C-terminal knotted domain. Mg(2+) contacts are provided by D191, E195, E227, and E231. S252 lines the substrate pocket.

It belongs to the ketol-acid reductoisomerase family. Requires Mg(2+) as cofactor.

The catalysed reaction is (2R)-2,3-dihydroxy-3-methylbutanoate + NADP(+) = (2S)-2-acetolactate + NADPH + H(+). It carries out the reaction (2R,3R)-2,3-dihydroxy-3-methylpentanoate + NADP(+) = (S)-2-ethyl-2-hydroxy-3-oxobutanoate + NADPH + H(+). Its pathway is amino-acid biosynthesis; L-isoleucine biosynthesis; L-isoleucine from 2-oxobutanoate: step 2/4. It functions in the pathway amino-acid biosynthesis; L-valine biosynthesis; L-valine from pyruvate: step 2/4. Functionally, involved in the biosynthesis of branched-chain amino acids (BCAA). Catalyzes an alkyl-migration followed by a ketol-acid reduction of (S)-2-acetolactate (S2AL) to yield (R)-2,3-dihydroxy-isovalerate. In the isomerase reaction, S2AL is rearranged via a Mg-dependent methyl migration to produce 3-hydroxy-3-methyl-2-ketobutyrate (HMKB). In the reductase reaction, this 2-ketoacid undergoes a metal-dependent reduction by NADPH to yield (R)-2,3-dihydroxy-isovalerate. The sequence is that of Ketol-acid reductoisomerase (NADP(+)) 1 from Streptomyces coelicolor (strain ATCC BAA-471 / A3(2) / M145).